The primary structure comprises 341 residues: uncharacterized protein (341 aa).

The protein belongs to the cycloisomerase 2 family.

This is an uncharacterized protein from Lactococcus lactis subsp. lactis (strain IL1403) (Streptococcus lactis).